The sequence spans 97 residues: MRTYEMMFVLRPDLEEEQVLETKERLQKIIADFGGEFINAADGWGKKRLAYAIDDYVEGIYSLWYFKGKPETVDELDRIIKISENFLRHIIIRQDEK.

It belongs to the bacterial ribosomal protein bS6 family.

In terms of biological role, binds together with bS18 to 16S ribosomal RNA. The protein is Small ribosomal subunit protein bS6 of Syntrophomonas wolfei subsp. wolfei (strain DSM 2245B / Goettingen).